Reading from the N-terminus, the 375-residue chain is MSCPVIELTQQLIRRPSLSPDDAGCQALLIERLQAIGFTVERMDFADTQNFWAWRGQGETLAFAGHTDVVPPGDADRWINPPFEPTIRDGMLFGRGAADMKGSLAAMVVAAERFVAQHPNHTGRLAFLITSDEEASAHNGTVKVVEALMARNERLDYCLVGEPSSIEVVGDVVKNGRRGSLTCNLTIHGVQGHVAYPHLADNPVHRAAPFLNELVAIEWDQGNEFFPATSMQIANIQAGTGSNNVIPGELFVQFNFRFSTELTDEMIKAQVLALLEKHQLRYTVDWWLSGQPFLTARGKLVDAVVNAVEHYNEIKPQLLTTGGTSDGRFIARMGAQVVELGPVNATIHKINECVNAADLQLLARMYQRIMEQLVA.

His66 is a binding site for Zn(2+). The active site involves Asp68. Residue Asp99 coordinates Zn(2+). Glu133 acts as the Proton acceptor in catalysis. The Zn(2+) site is built by Glu134, Glu162, and His348.

Belongs to the peptidase M20A family. DapE subfamily. In terms of assembly, homodimer. The cofactor is Zn(2+). Co(2+) is required as a cofactor.

The catalysed reaction is N-succinyl-(2S,6S)-2,6-diaminopimelate + H2O = (2S,6S)-2,6-diaminopimelate + succinate. It functions in the pathway amino-acid biosynthesis; L-lysine biosynthesis via DAP pathway; LL-2,6-diaminopimelate from (S)-tetrahydrodipicolinate (succinylase route): step 3/3. Its function is as follows. Catalyzes the hydrolysis of N-succinyl-L,L-diaminopimelic acid (SDAP), forming succinate and LL-2,6-diaminopimelate (DAP), an intermediate involved in the bacterial biosynthesis of lysine and meso-diaminopimelic acid, an essential component of bacterial cell walls. This Escherichia coli O139:H28 (strain E24377A / ETEC) protein is Succinyl-diaminopimelate desuccinylase.